Consider the following 176-residue polypeptide: Membrane glycoprotein UL144 (176 aa).

Positions 1 to 20 (MKPLVMLICFGVILLQLGVT) are cleaved as a signal peptide. Residues 58–95 (PCPNGTYVSGLYNCTDCTQCNVTQVMIRNCTSTNNTVC) form a TNFR-Cys repeat. 3 cysteine pairs are disulfide-bonded: Cys59–Cys71, Cys74–Cys87, and Cys77–Cys95. The chain crosses the membrane as a helical span at residues 134–154 (LAWLSLFIFLVGIILLILYLI).

Interacts with host TRIM23; this interaction causes auto-ubiquitination of TRAF6, leading to NF-kappaB activation.

It is found in the membrane. Functionally, activates NF-kappa-B in a tumor necrosis factor receptor (TNFR)-associated factor 6 (TRAF6)-dependent manner, causing the up-regulation of the chemokine CCL22. This Human cytomegalovirus (strain Merlin) (HHV-5) protein is Membrane glycoprotein UL144 (UL144).